The primary structure comprises 188 residues: Elongation factor P (188 aa).

Belongs to the elongation factor P family.

The protein resides in the cytoplasm. It functions in the pathway protein biosynthesis; polypeptide chain elongation. Involved in peptide bond synthesis. Stimulates efficient translation and peptide-bond synthesis on native or reconstituted 70S ribosomes in vitro. Probably functions indirectly by altering the affinity of the ribosome for aminoacyl-tRNA, thus increasing their reactivity as acceptors for peptidyl transferase. The chain is Elongation factor P from Methylorubrum populi (strain ATCC BAA-705 / NCIMB 13946 / BJ001) (Methylobacterium populi).